A 1726-amino-acid polypeptide reads, in one-letter code: MLVLGCLQCFTSAWGFASRRICHSSSATPGQHSVGLGHGYQHGAQSWAERFLLRYKGLLWFVGSRAHSGGEETNGKLQAGGCYSYWRGSLGIYFERGKEHGEPLIITKVEDGNKAADILMAGDEIVNINDQQLLGYRQEAICLVKGSHKILKMIVKRRNDISYRPHSWHSNKLIESAMDTVTPQMSNASPFWNARYRSSSSSHDLSNPWDQTSLQRNSGHFSSMGSMDSIDQTYQFGRLSSAKSNNSIDYVGSQNKRDSAYGSFSASFSTPDHTLSKTASASTENILYKNNEWDNTKLGYGKTSPSMNEVRRSADRQVLQSTSINETSKIQRTEDNTEPRYSGRSNFGPVWNIPDKKKTASPPPPPPPQRSDSYAVTKIHEKPTNLMHLDASSTQHFNVANRSQAKPDWSLEISEQQRPIRAHDRTVADTRRTSNSSYHAGLNADQGLSPYKDKYPSNLPNVSRIQASLSTNDVRFAQPAYNYHHQRQYSDESTLFQSTRTSAQHKSQQQPMKYESSVNQVPSDLTYVYHPHQFRAPATSAGFSSGKQNVENNGQNHFHVVSIKHPQGNTTHHQFKEEENYAPEVNSGRKSVQPENTVISIEIPAYSLPQESFEPSQINCEKNYLKISEKKDNYLGNNEQIINKTTGYSEEKCNDRFSQLDHSEKGSYRSSQDYSWRKEENKITPLVTPMLHSLAQEGRNRSESFPDTGNEKLSFPDAGKQSRRSDRFATTLRNEIQQRRARLQKSKSTAALTESNETETSDNWKQDSLESMSPTSEGSFSSTYRSHLQEAQARVLRATSFKRRDLDTGISDHLSLFQDRNMQISSFSGLSLDPVQPKKNTAVNSSQNVSRIGARKRFTTQQKLMSYSEPEKINEVGVEDQYNFRTENSTKRTVGSFADRWKFFEETSKCAQPKVPPKVVSSSQSEETSEIAINRDYAKSSEGQESKRALAVSGQNPADENGFPDKVTTERRQRLGTFAEYEASWKEQKTQLERKNSGRCHSADNILDADLEQNPKAQYIHERSKSSPTTDFYAQAAAVESKQQSESVRRDTENSNSTHCRSSTGDSPTRTVEAGDQCGATNEQEVLTCNTKWKPHDKSFPIPETSNESQQSRARSGTLPNDYRFAHENVNQGNRDISFSAVPISEACPDFSNADSDQLQDHPSVFKKRSAAPQRPPPPKLENKYWRQNGSSSSLATSSESLLTAQARRAQSYSPSSQDTFPPQSLQKQSPSTYPDKNPSIHIYDYQLSVPPENDRYHLEKKYFESELSSKSHLQIPGMEPSRSPSPQFAPQKLTDKPPLLVPEENLSRIERVIDNTTVKMVPIKIVHSETHAEKESRHNLLSAIEPTALPTGLAKDQLKTLSTSEQSYSRFCAYTRQESREEEESRVTDLYSCQRNAEDDNENDVSSLAPSNAKSKDAIYADLKSEELVREIVDKDKSLADILDPNAKMRTTMDLMEGIFPKDEHLLEEAQQRRKHLPKIPSPRSTDDKKDEQNVPSAVSLTTSSTYYSTSAAKAELLIKMKDMQEQQHIAENSEDELGQNLSEKKQELIDSISKKLQVLRDAKETLLEDVQCNNALGEEVEIIVKEVCKPNEFDKFRMFIGDLEKIVNLLLSLSGRLARVENALNNLDETVSPEERKTLLEKRKLLTRQHEDAKELKENLDRRERTVYEILANYLNEENLADYEHFVKMKSALILEQRELEDKIKLRESQLKCLTDSLPLDRIK.

A PDZ domain is found at 79 to 159 (AGGCYSYWRG…ILKMIVKRRN (81 aa)). Disordered regions lie at residues 294 to 373 (DNTK…RSDS), 425 to 451 (RTVA…LSPY), 657 to 676 (FSQL…DYSW), and 697 to 785 (EGRN…STYR). The span at 318-328 (VLQSTSINETS) shows a compositional bias: polar residues. The segment covering 329-338 (KIQRTEDNTE) has biased composition (basic and acidic residues). The segment covering 657 to 667 (FSQLDHSEKGS) has biased composition (basic and acidic residues). Polar residues-rich tracts occupy residues 746–755 (SKSTAALTES) and 769–785 (LESM…STYR). The ASD1 domain maps to 788–877 (LQEAQARVLR…SEPEKINEVG (90 aa)). Disordered regions lie at residues 913–968 (PKVP…DKVT), 1007–1080 (LDAD…QCGA), 1092–1120 (KWKP…GTLP), 1166–1240 (FKKR…KNPS), 1269–1299 (SSKS…DKPP), and 1471–1499 (AQQR…VPSA). The span at 917 to 926 (PKVVSSSQSE) shows a compositional bias: low complexity. The span at 936–948 (DYAKSSEGQESKR) shows a compositional bias: basic and acidic residues. 2 stretches are compositionally biased toward polar residues: residues 1054–1070 (NSNS…SPTR) and 1104–1119 (ETSN…SGTL). The span at 1191 to 1205 (SSSSLATSSESLLTA) shows a compositional bias: low complexity. Residues 1209-1235 (RAQSYSPSSQDTFPPQSLQKQSPSTYP) are compositionally biased toward polar residues. In terms of domain architecture, ASD2 spans 1427-1721 (EELVREIVDK…QLKCLTDSLP (295 aa)).

It belongs to the shroom family. As to quaternary structure, interacts with F-actin.

The protein resides in the apical cell membrane. The protein localises to the cell junction. It is found in the tight junction. Its subcellular location is the cytoplasm. It localises to the cytoskeleton. May be involved in endothelial cell morphology changes during cell spreading. Required for eye pigmentation. In the retinal pigment epithelium, regulates the biogenesis of melanosomes and promotes their association with the apical cell surface by inducing gamma-tubulin redistribution. The protein is Protein Shroom2 (shroom2) of Xenopus tropicalis (Western clawed frog).